The primary structure comprises 162 residues: Interleukin-15 (162 aa).

Positions 1 to 29 (MRISKPHLRSISIQCYLCLLLKSHFLTEA) are cleaved as a signal peptide. Positions 30 to 48 (GIHVFILGCFSAGLPKTEA) are excised as a propeptide. Cystine bridges form between cysteine 83/cysteine 133 and cysteine 90/cysteine 136. Residue asparagine 127 is glycosylated (N-linked (GlcNAc...) asparagine).

Belongs to the IL-15/IL-21 family.

The protein resides in the secreted. Cytokine that plays a major role in the development of inflammatory and protective immune responses to microbial invaders and parasites by modulating immune cells of both the innate and adaptive immune systems. Stimulates the proliferation of natural killer cells, T-cells and B-cells and promotes the secretion of several cytokines. In monocytes, induces the production of IL8 and monocyte chemotactic protein 1/CCL2, two chemokines that attract neutrophils and monocytes respectively to sites of infection. Unlike most cytokines, which are secreted in soluble form, IL15 is expressed in association with its high affinity IL15RA on the surface of IL15-producing cells and delivers signals to target cells that express IL2RB and IL2RG receptor subunits. Binding to its receptor triggers the phosphorylation of JAK1 and JAK3 and the recruitment and subsequent phosphorylation of signal transducer and activator of transcription-3/STAT3 and STAT5. In mast cells, induces the rapid tyrosine phosphorylation of STAT6 and thereby controls mast cell survival and release of cytokines such as IL4. The sequence is that of Interleukin-15 (IL15) from Chlorocebus aethiops (Green monkey).